Here is a 175-residue protein sequence, read N- to C-terminus: Alpha-crystallin B chain (175 aa).

M1 is modified (N-acetylmethionine). Phosphoserine is present on S19. Residue S41 is glycosylated (O-linked (GlcNAc) serine). Phosphoserine is present on residues S45 and S59. One can recognise a sHSP domain in the interval 56 to 164; the sequence is RAPSWIDTGL…PERTIPITRE (109 aa). H83 provides a ligand contact to Zn(2+). K92 is subject to N6-acetyllysine. Zn(2+)-binding residues include H104, E106, H111, and H119. The tract at residues 142–175 is disordered; the sequence is VLTVNGPRKQASGPERTIPITREEKPAVTAAPKK. Residue K166 is modified to N6-acetyllysine. An O-linked (GlcNAc) threonine glycan is attached at T170.

It belongs to the small heat shock protein (HSP20) family. As to quaternary structure, heteromer composed of three CRYAA and one CRYAB subunits. Aggregates with homologous proteins, including the small heat shock protein HSPB1, to form large heteromeric complexes. Inter-subunit bridging via zinc ions enhances stability, which is crucial as there is no protein turn over in the lens. Interacts with HSPBAP1 and TTN/titin. Interacts with TMEM109; in the cellular response to DNA damage. Interacts with DES; binds rapidly during early stages of DES filament assembly and a reduced binding seen in the later stages. Interacts with ATP6V1A and with MTOR, forming a ternary complex. Lens as well as other tissues.

It is found in the cytoplasm. The protein localises to the nucleus. The protein resides in the secreted. It localises to the lysosome. May contribute to the transparency and refractive index of the lens. Has chaperone-like activity, preventing aggregation of various proteins under a wide range of stress conditions. In lens epithelial cells, stabilizes the ATP6V1A protein, preventing its degradation by the proteasome. The chain is Alpha-crystallin B chain (CRYAB) from Spalax judaei (Judean Mountains blind mole rat).